The chain runs to 350 residues: MATTAQQSPQPVAGKRKGKSQFLPAKRARRGDAGGPRQLEPGLQGILITCNMNERKCVEEAYSLLNEYGDDMYGPEKFIDKDQQPSGSEGEDDDAEAALKKEVGDIKASTEKRLRRFQSVESGANNVVFIRTLGIEPEKLVHHILQDMYKTKKKKTRVILRMLPISGTCKAFLEDMKKYAETFLEPWFKAPNKGTFQIVYKSRNNSHMNREEVIKELAGIVGSLNSENKVDLTNPEYTVVVEIIKAVCCLSVVKDYVLFRKYNLQEVVKSAKDSQPHPKLGNGKEAKLEPDSKLSQSDPPEGNQVAPESIEELGQTEPGSETQAGSEGDAKPEPESQVSEVPKTNENELS.

The span at 1-10 (MATTAQQSPQ) shows a compositional bias: polar residues. 2 disordered regions span residues 1-42 (MATT…LEPG) and 75-96 (PEKFIDKDQQPSGSEGEDDDAE). At Ala2 the chain carries N-acetylalanine. 4 positions are modified to phosphoserine: Ser8, Ser86, Ser88, and Ser119. A THUMP domain is found at 147–254 (DMYKTKKKKT…KAVCCLSVVK (108 aa)). At Ser270 the chain carries Phosphoserine. Positions 270–292 (SAKDSQPHPKLGNGKEAKLEPDS) are enriched in basic and acidic residues. A disordered region spans residues 270-350 (SAKDSQPHPK…VPKTNENELS (81 aa)).

Belongs to the THUMPD1 family. Interacts with NAT10. Binds tRNA.

Functionally, functions as a tRNA-binding adapter to mediate NAT10-dependent tRNA acetylation modifying cytidine to N4-acetylcytidine (ac4C). In Mus musculus (Mouse), this protein is THUMP domain-containing protein 1 (Thumpd1).